Consider the following 505-residue polypeptide: Cytochrome P450 monooxygenase FGM1 (505 aa).

Residues 1 to 23 (MPLILSITSSGTVLVLLTLLSLA) form the signal peptide. Residues N188 and N351 are each glycosylated (N-linked (GlcNAc...) asparagine). Residue C450 coordinates heme.

Belongs to the cytochrome P450 family. The cofactor is heme.

The protein operates within secondary metabolite biosynthesis. In terms of biological role, cytochrome P450 monooxygenase; part of the Fg3_54/C64 gene cluster that mediates the biosynthesis of the octapeptide fusaoctaxin A, a virulence factor that is required for cell-to-cell invasiveness of plant host. The 2 nonribosomal peptide synthetases NRPS9 and NRPS5 form an assembly line which likely utilizes GABA as a starter unit (loaded on the unique module M1 of NRPS9) and sequentially incorporates seven extender units composed of the residues L-Ala, L-allo-Ile, L-Ser, L-Val, L-Ser, L-Leu and L-Leu, respectively. During the process, each of the residues that are tethered on modules M3-M7 of NRPS5 containing an E domain can undergo an epimerization reaction to produce a D-configuration before the transpeptidation reaction occurs. The elongation of the peptidyl chain might be terminated by module M8-mediated L-Leu incorporation, followed by R domain-catalyzed 4 electron reduction to release the resulting octapeptide from the assembly line as an alcohol. Fusaoctaxin A is cleaved by the cluster specific ABC transporter FGM5 to the pentapeptide fusapentaxin A and the tripeptide fusatrixin A. The other enzymes from the cluster, FGM1, FGM2, FGM3 and FGM9 seem not to be involved in the biosynthesis of fusaoctaxin A and their functions have still to be determined. In Gibberella zeae (strain ATCC MYA-4620 / CBS 123657 / FGSC 9075 / NRRL 31084 / PH-1) (Wheat head blight fungus), this protein is Cytochrome P450 monooxygenase FGM1.